The sequence spans 363 residues: Small ribosomal subunit biogenesis GTPase RsgA (363 aa).

The CP-type G domain maps to 112–268; sequence HQQVIAANID…LIDTPGMREL (157 aa). Residues 157–160 and 210–218 each bind GTP; these read TKAD and GSSGAGKST. Residues C291, C296, H298, and C304 each contribute to the Zn(2+) site. A disordered region spans residues 340–363; the sequence is RVAQNNRGKGSGKRPASVDRPGRH.

It belongs to the TRAFAC class YlqF/YawG GTPase family. RsgA subfamily. As to quaternary structure, monomer. Associates with 30S ribosomal subunit, binds 16S rRNA. It depends on Zn(2+) as a cofactor.

The protein resides in the cytoplasm. Its function is as follows. One of several proteins that assist in the late maturation steps of the functional core of the 30S ribosomal subunit. Helps release RbfA from mature subunits. May play a role in the assembly of ribosomal proteins into the subunit. Circularly permuted GTPase that catalyzes slow GTP hydrolysis, GTPase activity is stimulated by the 30S ribosomal subunit. The protein is Small ribosomal subunit biogenesis GTPase RsgA of Xanthomonas axonopodis pv. citri (strain 306).